Consider the following 511-residue polypeptide: Rab proteins geranylgeranyltransferase component A (511 aa).

Belongs to the Rab GDI family.

It is found in the cytoplasm. It localises to the perinuclear region. The protein resides in the cytoskeleton. Its subcellular location is the spindle pole. Functionally, binds unprenylated Rab proteins, presents it to the catalytic component B, and remains bound to it after the geranylgeranyl transfer reaction. The component A is thought to be regenerated by transferring its prenylated Rab to a protein acceptor. This is Rab proteins geranylgeranyltransferase component A from Drosophila melanogaster (Fruit fly).